The following is a 396-amino-acid chain: Lysophospholipid transporter LplT (396 aa).

Topologically, residues 1–17 (MSESVHTNTSLWSKGMK) are periplasmic. The chain crosses the membrane as a helical span at residues 18–38 (AVIVAQFLSAFGDNALLFATL). Topologically, residues 39–52 (ALLKAQFYPEWSQP) are cytoplasmic. Residues 53–73 (ILQMVFVGAYILLAPFVGQVA) traverse the membrane as a helical segment. Over 74–90 (DSFAKGRVMMFANGLKL) the chain is Periplasmic. A helical transmembrane segment spans residues 91–111 (LGAASICFGINPFLGYTLVGV). Residues 112 to 144 (GAAAYSPAKYGILGELTTGSKLVKANGLMEASA) lie on the Cytoplasmic side of the membrane. The helical transmembrane segment at 145 to 165 (IAAILLGSVAGGVLADWHVLV) threads the bilayer. Position 166 (Ala-166) is a topological domain, periplasmic. The chain crosses the membrane as a helical span at residues 167–187 (LAACALAYGGAVVANIYIPKL). Over 188–225 (AARPGQSWNLINMTRSFLNACTSLWCNGETRFSLVGTS) the chain is Cytoplasmic. The chain crosses the membrane as a helical span at residues 226 to 246 (LFWGAGVTLRFLLVLWVPVAL). Topologically, residues 247–255 (GITDNATPT) are periplasmic. The helical transmembrane segment at 256–276 (YLNAMVAIGIVVGAGAAAKLV) threads the bilayer. At 277–279 (TLE) the chain is on the cytoplasmic side. Residues 280–300 (TVSRCMPAGILIGVVVPIFSL) traverse the membrane as a helical segment. The Periplasmic segment spans residues 301–303 (QHE). A helical membrane pass occupies residues 304 to 324 (LLPAYALLMLIGVLGGFFVVP). At 325–342 (LNALLQERGKKSVGAGNA) the chain is on the cytoplasmic side. A helical membrane pass occupies residues 343–363 (IAVQNLGENSAMLLMLGIYSL). Residues 364-365 (AV) are Periplasmic-facing. A helical transmembrane segment spans residues 366-386 (MVGIPVVPIGIGFGALFALAI). Residues 387–396 (TALWIWQRRH) are Cytoplasmic-facing.

It belongs to the major facilitator superfamily. LplT (TC 2.A.1.42) family.

The protein resides in the cell inner membrane. Catalyzes the facilitated diffusion of 2-acyl-glycero-3-phosphoethanolamine (2-acyl-GPE) into the cell. The chain is Lysophospholipid transporter LplT from Shigella flexneri.